The chain runs to 456 residues: Hydroxymethylglutaryl-CoA synthase ERG13 (456 aa).

Ala35 provides a ligand contact to (3S)-3-hydroxy-3-methylglutaryl-CoA. The active-site Proton donor/acceptor is Glu86. 8 residues coordinate (3S)-3-hydroxy-3-methylglutaryl-CoA: Cys118, Asn156, Thr160, Ser210, His259, Lys268, Asn336, and Ser370. Cys118 (acyl-thioester intermediate) is an active-site residue. Residue His259 is the Proton donor/acceptor of the active site.

The protein belongs to the thiolase-like superfamily. HMG-CoA synthase family.

The catalysed reaction is acetoacetyl-CoA + acetyl-CoA + H2O = (3S)-3-hydroxy-3-methylglutaryl-CoA + CoA + H(+). Its pathway is metabolic intermediate biosynthesis; (R)-mevalonate biosynthesis; (R)-mevalonate from acetyl-CoA: step 2/3. Hydroxymethylglutaryl-CoA synthase; part of the first module of ergosterol biosynthesis pathway that includes the early steps of the pathway, conserved across all eukaryotes, and which results in the formation of mevalonate from acetyl-coenzyme A (acetyl-CoA). ERG13 condenses acetyl-CoA with acetoacetyl-CoA to form hydroxymethylglutaryl-CoA (HMG-CoA). The first module starts with the action of the cytosolic acetyl-CoA acetyltransferase ERG10B that catalyzes the formation of acetoacetyl-CoA. The hydroxymethylglutaryl-CoA synthases ERG13 then condenses acetyl-CoA with acetoacetyl-CoA to form HMG-CoA. The rate-limiting step of the early module is the reduction to mevalonate by the 3-hydroxy-3-methylglutaryl-coenzyme A (HMG-CoA) reductases HMG1. The sequence is that of Hydroxymethylglutaryl-CoA synthase ERG13 from Gibberella zeae (strain ATCC MYA-4620 / CBS 123657 / FGSC 9075 / NRRL 31084 / PH-1) (Wheat head blight fungus).